The chain runs to 480 residues: UDP-glycosyltransferase 72B1 (480 aa).

H19 (proton acceptor) is an active-site residue. Catalysis depends on D117, which acts as the Charge relay. Positions 277, 346, 347, and 364 each coordinate UDP. UDP-alpha-D-glucose is bound by residues S277, W346, A347, H364, W367, N368, S369, E372, Y386, E388, and Q389. 4 residues coordinate UDP: N368, S369, E372, and Y386.

The protein belongs to the UDP-glycosyltransferase family.

It carries out the reaction hydroquinone + UDP-alpha-D-glucose = hydroquinone O-beta-D-glucopyranoside + UDP + H(+). Its function is as follows. Bifunctional O-glycosyltransferase and N-glycosyltransferase that can detoxify xenobiotics. Possesses high activity to metabolize the persistent pollutants 2,4,5-trichlorophenol (TCP) and 3,4-dichloroaniline (DCA). Also active on benzoates and benzoate derivatives in vitro. This Arabidopsis thaliana (Mouse-ear cress) protein is UDP-glycosyltransferase 72B1 (UGT72B1).